The sequence spans 352 residues: Protein-glutamate methylesterase/protein-glutamine glutaminase 2 (352 aa).

The region spanning 1-116 is the Response regulatory domain; the sequence is MIVDDSAIVR…KDFIQDAASD (116 aa). At aspartate 50 the chain carries 4-aspartylphosphate. One can recognise a CheB-type methylesterase domain in the interval 159–351; that stretch reads SKTTEHVVAI…QEIMRYAHLK (193 aa). Residues serine 171, histidine 197, and aspartate 293 contribute to the active site.

Belongs to the CheB family. In terms of processing, phosphorylated by CheA. Phosphorylation of the N-terminal regulatory domain activates the methylesterase activity.

The protein localises to the cytoplasm. It carries out the reaction [protein]-L-glutamate 5-O-methyl ester + H2O = L-glutamyl-[protein] + methanol + H(+). It catalyses the reaction L-glutaminyl-[protein] + H2O = L-glutamyl-[protein] + NH4(+). In terms of biological role, involved in chemotaxis. Part of a chemotaxis signal transduction system that modulates chemotaxis in response to various stimuli. Catalyzes the demethylation of specific methylglutamate residues introduced into the chemoreceptors (methyl-accepting chemotaxis proteins or MCP) by CheR. Also mediates the irreversible deamidation of specific glutamine residues to glutamic acid. The sequence is that of Protein-glutamate methylesterase/protein-glutamine glutaminase 2 from Shewanella denitrificans (strain OS217 / ATCC BAA-1090 / DSM 15013).